Here is a 428-residue protein sequence, read N- to C-terminus: Elongation factor 1-alpha (428 aa).

In terms of domain architecture, tr-type G spans 5–215 (KPHINIVFIG…ALDQMPEPPK (211 aa)). A G1 region spans residues 14–21 (GHVDHGKS). 14–21 (GHVDHGKS) contributes to the GTP binding site. Ser21 contributes to the Mg(2+) binding site. A G2 region spans residues 68–72 (GITID). Residues 89–92 (DAPG) form a G3 region. GTP is bound by residues 89-93 (DAPGH) and 144-147 (NKMD). A G4 region spans residues 144 to 147 (NKMD). The G5 stretch occupies residues 181–183 (SAW).

This sequence belongs to the TRAFAC class translation factor GTPase superfamily. Classic translation factor GTPase family. EF-Tu/EF-1A subfamily.

Its subcellular location is the cytoplasm. The catalysed reaction is GTP + H2O = GDP + phosphate + H(+). Its function is as follows. GTP hydrolase that promotes the GTP-dependent binding of aminoacyl-tRNA to the A-site of ribosomes during protein biosynthesis. This chain is Elongation factor 1-alpha, found in Thermococcus celer.